The chain runs to 315 residues: Nucleotide-binding protein CGSHiEE_06315 (315 aa).

8–15 (GRSGAGKS) is a binding site for ATP. 56 to 59 (DIRN) contacts GTP.

The protein belongs to the RapZ-like family.

Functionally, displays ATPase and GTPase activities. The protein is Nucleotide-binding protein CGSHiEE_06315 of Haemophilus influenzae (strain PittEE).